The chain runs to 264 residues: Hemin import ATP-binding protein HmuV (264 aa).

An ABC transporter domain is found at 2–242 (IEAVNICVQR…QNLSDAYHCS (241 aa)). 34–41 (GPNGSGKS) contributes to the ATP binding site.

It belongs to the ABC transporter superfamily. Heme (hemin) importer (TC 3.A.1.14.5) family. The complex is composed of two ATP-binding proteins (HmuV), two transmembrane proteins (HmuU) and a solute-binding protein (HmuT).

Its subcellular location is the cell inner membrane. In terms of biological role, part of the ABC transporter complex HmuTUV involved in hemin import. Responsible for energy coupling to the transport system. This Bartonella quintana (strain Toulouse) (Rochalimaea quintana) protein is Hemin import ATP-binding protein HmuV.